A 283-amino-acid chain; its full sequence is NAD kinase (283 aa).

Residue Asp61 is the Proton acceptor of the active site. NAD(+) is bound by residues 61–62 (DG), 134–135 (ND), Arg145, Asp164, 175–180 (TAYNLS), and Gln234.

This sequence belongs to the NAD kinase family. A divalent metal cation is required as a cofactor.

It localises to the cytoplasm. It carries out the reaction NAD(+) + ATP = ADP + NADP(+) + H(+). Its function is as follows. Involved in the regulation of the intracellular balance of NAD and NADP, and is a key enzyme in the biosynthesis of NADP. Catalyzes specifically the phosphorylation on 2'-hydroxyl of the adenosine moiety of NAD to yield NADP. In Clostridium kluyveri (strain NBRC 12016), this protein is NAD kinase.